Reading from the N-terminus, the 181-residue chain is UPF0340 protein OB2986 (181 aa).

The protein belongs to the UPF0340 family.

This is UPF0340 protein OB2986 from Oceanobacillus iheyensis (strain DSM 14371 / CIP 107618 / JCM 11309 / KCTC 3954 / HTE831).